A 148-amino-acid chain; its full sequence is Extracellular globin-2B (148 aa).

Residues 3–148 (CCSAADRHEV…IADVIKAELP (146 aa)) form the Globin domain. A disulfide bond links Cys-4 and Cys-135. His-98 lines the heme b pocket.

The protein belongs to the globin family. As to quaternary structure, disulfide bonded trimer of chains IIA, IIB, and IIC.

The protein localises to the secreted. In Tylorrhynchus heterochetus (Japanese palolo worm), this protein is Extracellular globin-2B.